The primary structure comprises 87 residues: Potassium channel toxin Tdi-beta-KTx (87 aa).

The first 19 residues, 1-19 (MERKLALLLLLGMITLASS), serve as a signal peptide directing secretion. A propeptide spanning residues 20–27 (GLREKHVQ) is cleaved from the precursor. The BetaSPN-type CS-alpha/beta domain occupies 53-87 (QFGCPAYEGYCMNHCQDIERHDGSCHGFKCKCEKS). 3 cysteine pairs are disulfide-bonded: Cys-56–Cys-77, Cys-63–Cys-82, and Cys-67–Cys-84.

Expressed by the venom gland.

The protein localises to the secreted. Functionally, inhibits voltage-gated potassium channel. This chain is Potassium channel toxin Tdi-beta-KTx, found in Tityus discrepans (Venezuelan scorpion).